The chain runs to 511 residues: Maturase K (511 aa).

Belongs to the intron maturase 2 family. MatK subfamily.

The protein localises to the plastid. Its subcellular location is the chloroplast. Its function is as follows. Usually encoded in the trnK tRNA gene intron. Probably assists in splicing its own and other chloroplast group II introns. In Nardus stricta (Mat-grass), this protein is Maturase K.